We begin with the raw amino-acid sequence, 352 residues long: UDP-3-O-acylglucosamine N-acyltransferase (352 aa).

His244 serves as the catalytic Proton acceptor.

Belongs to the transferase hexapeptide repeat family. LpxD subfamily. In terms of assembly, homotrimer.

The enzyme catalyses a UDP-3-O-[(3R)-3-hydroxyacyl]-alpha-D-glucosamine + a (3R)-hydroxyacyl-[ACP] = a UDP-2-N,3-O-bis[(3R)-3-hydroxyacyl]-alpha-D-glucosamine + holo-[ACP] + H(+). It functions in the pathway bacterial outer membrane biogenesis; LPS lipid A biosynthesis. In terms of biological role, catalyzes the N-acylation of UDP-3-O-acylglucosamine using 3-hydroxyacyl-ACP as the acyl donor. Is involved in the biosynthesis of lipid A, a phosphorylated glycolipid that anchors the lipopolysaccharide to the outer membrane of the cell. The chain is UDP-3-O-acylglucosamine N-acyltransferase from Anaeromyxobacter sp. (strain Fw109-5).